The primary structure comprises 539 residues: Probable K(+)/H(+) antiporter subunit D (539 aa).

Helical transmembrane passes span 4–23, 36–58, 78–100, 113–135, 140–162, 175–197, 217–239, 251–273, 283–305, 312–331, 335–357, 400–422, 442–464, and 484–506; these read WLDH…AAVL, AIGF…LAAA, FGIV…GLAL, AGHH…FLTG, LFVF…SGPL, LAAS…TLNM, MGSA…SFWL, AGVF…LLVF, FGQE…GVLA, LAGY…VGLG, MLAG…FLLI, VLGL…SGFI, AMSA…AMIA, and VVVI…SLQA.

This sequence belongs to the CPA3 antiporters (TC 2.A.63) subunit D family. As to quaternary structure, may form a hetero-oligomeric complex that consists of six subunits: PhaAB, PhaC, PhaD, PhaE, PhaF and PhaG.

It localises to the cell membrane. Functionally, part of a K(+) efflux system which is required for the adaptation of R.meliloti to alkaline pH as well as for the infection process during symbiotic nodule development. The polypeptide is Probable K(+)/H(+) antiporter subunit D (phaD) (Rhizobium meliloti (strain 1021) (Ensifer meliloti)).